Here is a 412-residue protein sequence, read N- to C-terminus: Hyaluronidase-3 (412 aa).

The N-terminal stretch at 1–22 (MITQLGLTLVVGLTLCLVHVQA) is a signal peptide. Cystine bridges form between cysteine 42–cysteine 332, cysteine 206–cysteine 221, cysteine 357–cysteine 368, cysteine 362–cysteine 396, and cysteine 398–cysteine 407. Asparagine 69 is a glycosylation site (N-linked (GlcNAc...) asparagine). The active-site Proton donor is glutamate 129. Asparagine 216 carries an N-linked (GlcNAc...) asparagine glycan. Residues 353-408 (AATACSHQRCHGHGRCSWKDPGQMEAFLHLQPDDNLGAWKSFRCRCYLGWSGPTCL) enclose the EGF-like domain.

This sequence belongs to the glycosyl hydrolase 56 family. N-glycosylated.

It is found in the secreted. The protein resides in the cell membrane. It localises to the cytoplasmic vesicle. Its subcellular location is the secretory vesicle. The protein localises to the acrosome. It is found in the endoplasmic reticulum. The protein resides in the early endosome. The catalysed reaction is Random hydrolysis of (1-&gt;4)-linkages between N-acetyl-beta-D-glucosamine and D-glucuronate residues in hyaluronate.. Functionally, facilitates sperm penetration into the layer of cumulus cells surrounding the egg by digesting hyaluronic acid. Involved in induction of the acrosome reaction in the sperm. Involved in follicular atresia, the breakdown of immature ovarian follicles that are not selected to ovulate. Induces ovarian granulosa cell apoptosis, possibly via apoptotic signaling pathway involving CASP8 and CASP3 activation, and poly(ADP-ribose) polymerase (PARP) cleavage. Has no hyaluronidase activity in embryonic fibroblasts in vitro. Has no hyaluronidase activity in granulosa cells in vitro. This Rattus norvegicus (Rat) protein is Hyaluronidase-3 (Hyal3).